Consider the following 304-residue polypeptide: Polyisoprenyl-teichoic acid--peptidoglycan teichoic acid transferase TagU (304 aa).

The Cytoplasmic segment spans residues 1-4 (MKKK). A helical; Signal-anchor for type II membrane protein transmembrane segment spans residues 5–25 (ILFWILGIIGILIIGGGAYAY). The Extracellular portion of the chain corresponds to 26-304 (SIYSSVSKTL…KLRAHLEVTK (279 aa)).

This sequence belongs to the LytR/CpsA/Psr (LCP) family.

Its subcellular location is the cell membrane. It functions in the pathway cell wall biogenesis. May catalyze the final step in cell wall teichoic acid biosynthesis, the transfer of the anionic cell wall polymers (APs) from their lipid-linked precursor to the cell wall peptidoglycan (PG). This is Polyisoprenyl-teichoic acid--peptidoglycan teichoic acid transferase TagU from Bacillus cereus (strain ATCC 14579 / DSM 31 / CCUG 7414 / JCM 2152 / NBRC 15305 / NCIMB 9373 / NCTC 2599 / NRRL B-3711).